The following is a 439-amino-acid chain: 5-methylthioadenosine/S-adenosylhomocysteine deaminase (439 aa).

Positions 70 and 72 each coordinate Zn(2+). Substrate-binding residues include Glu-99 and His-192. Residue His-219 participates in Zn(2+) binding. 2 residues coordinate substrate: Glu-222 and Asp-307. Residue Asp-307 participates in Zn(2+) binding.

It belongs to the metallo-dependent hydrolases superfamily. MTA/SAH deaminase family. Requires Zn(2+) as cofactor.

The enzyme catalyses S-adenosyl-L-homocysteine + H2O + H(+) = S-inosyl-L-homocysteine + NH4(+). It carries out the reaction S-methyl-5'-thioadenosine + H2O + H(+) = S-methyl-5'-thioinosine + NH4(+). Its function is as follows. Catalyzes the deamination of 5-methylthioadenosine and S-adenosyl-L-homocysteine into 5-methylthioinosine and S-inosyl-L-homocysteine, respectively. Is also able to deaminate adenosine. The polypeptide is 5-methylthioadenosine/S-adenosylhomocysteine deaminase (Thermodesulfovibrio yellowstonii (strain ATCC 51303 / DSM 11347 / YP87)).